Reading from the N-terminus, the 285-residue chain is Alpha-acetolactate decarboxylase (285 aa).

The signal sequence occupies residues 1–25 (MKKNIITSITSLALVAGLSLTAFAA).

Belongs to the alpha-acetolactate decarboxylase family.

The catalysed reaction is (2S)-2-acetolactate + H(+) = (R)-acetoin + CO2. It functions in the pathway polyol metabolism; (R,R)-butane-2,3-diol biosynthesis; (R,R)-butane-2,3-diol from pyruvate: step 2/3. In terms of biological role, converts acetolactate into acetoin, which can be excreted by the cells. This may be a mechanism for controlling the internal pH of cells in the stationary stage. The protein is Alpha-acetolactate decarboxylase (aldB) of Brevibacillus brevis (Bacillus brevis).